The primary structure comprises 251 residues: Triosephosphate isomerase (251 aa).

A substrate-binding site is contributed by 9 to 11; the sequence is NWK. Catalysis depends on His95, which acts as the Electrophile. Glu167 (proton acceptor) is an active-site residue. Substrate-binding positions include Gly173, Ser213, and 234–235; that span reads GG. Ser213 carries the post-translational modification Phosphoserine.

Belongs to the triosephosphate isomerase family. Homodimer.

It localises to the cytoplasm. The enzyme catalyses D-glyceraldehyde 3-phosphate = dihydroxyacetone phosphate. It participates in carbohydrate biosynthesis; gluconeogenesis. It functions in the pathway carbohydrate degradation; glycolysis; D-glyceraldehyde 3-phosphate from glycerone phosphate: step 1/1. Involved in the gluconeogenesis. Catalyzes stereospecifically the conversion of dihydroxyacetone phosphate (DHAP) to D-glyceraldehyde-3-phosphate (G3P). This chain is Triosephosphate isomerase, found in Bacillus cereus (strain G9842).